A 227-amino-acid chain; its full sequence is Eukaryotic translation initiation factor 4E-1 (227 aa).

The disordered stretch occupies residues 1 to 52; the sequence is MAEEHETRPPSAGRPPSSGRGRADDADEREEGEIADDDSGHAPPQANPAAPH. Low complexity predominate over residues 9 to 20; it reads PPSAGRPPSSGR. The span at 25–37 shows a compositional bias: acidic residues; sequence DADEREEGEIADD. 2 EIF4G-binding regions span residues 52 to 55 and 62 to 98; these read HPLE and FDNP…NNIH. Residues 70–75, lysine 102, and 120–121 each bind mRNA; these read KQATWG and WE. A disulfide bond links cysteine 125 and cysteine 163. The interval 146-155 is EIF4G-binding; sequence HTLLAMIGEQ. MRNA-binding positions include 170 to 175 and 215 to 219; these read RGKQER and KKMDK.

This sequence belongs to the eukaryotic initiation factor 4E family. In terms of assembly, EIF4F is a multi-subunit complex, the composition of which varies with external and internal environmental conditions. It is composed of at least EIF4A, EIF4E and EIF4G. EIF4E is also known to interact with other partners. In higher plants two isoforms of EIF4F have been identified, named isoform EIF4F and isoform EIF(iso)4F. Isoform EIF4F has subunits p220 and p26, whereas isoform EIF(iso)4F has subunits p82 and p28. In terms of processing, according to the redox status, the Cys-125-Cys-163 disulfide bridge may have a role in regulating protein function by affecting its ability to bind capped mRNA.

It is found in the nucleus. It localises to the cytoplasm. Component of the protein complex eIF4F, which is involved in the recognition of the mRNA cap, ATP-dependent unwinding of 5'-terminal secondary structure and recruitment of mRNA to the ribosome. Recognizes and binds the 7-methylguanosine-containing mRNA cap during an early step in the initiation of protein synthesis and facilitates ribosome binding by inducing the unwinding of the mRNAs secondary structures. This is Eukaryotic translation initiation factor 4E-1 from Oryza sativa subsp. japonica (Rice).